Consider the following 486-residue polypeptide: Cardiolipin synthase A (486 aa).

The next 2 helical transmembrane spans lie at 3-23 and 38-58; these read TVYT…IAGV and MAWL…YLAV. PLD phosphodiesterase domains lie at 219-246 and 399-426; these read MDLR…VDPR and EGGL…DMRS. Active-site residues include His224, Lys226, Asp231, His404, Lys406, and Asp411.

The protein belongs to the phospholipase D family. Cardiolipin synthase subfamily. ClsA sub-subfamily.

It is found in the cell inner membrane. The enzyme catalyses 2 a 1,2-diacyl-sn-glycero-3-phospho-(1'-sn-glycerol) = a cardiolipin + glycerol. Functionally, catalyzes the reversible phosphatidyl group transfer from one phosphatidylglycerol molecule to another to form cardiolipin (CL) (diphosphatidylglycerol) and glycerol. The chain is Cardiolipin synthase A from Escherichia coli O7:K1 (strain IAI39 / ExPEC).